Here is a 510-residue protein sequence, read N- to C-terminus: P-(S)-hydroxymandelonitrile lyase (510 aa).

The first 34 residues, 1–34 (MAVFISSSGSPGRATATTTTTTTLLLAVLAAAAA), serve as a signal peptide directing secretion. 116-118 (NGG) contacts substrate. 3 disulfides stabilise this stretch: cysteine 121–cysteine 377, cysteine 277–cysteine 289, and cysteine 313–cysteine 344. Asparagine 172 carries N-linked (GlcNAc...) asparagine glycosylation. Position 212-213 (212-213 (ES)) interacts with substrate. The active site involves serine 213. N-linked (GlcNAc...) asparagine glycosylation occurs at asparagine 365. Residues aspartate 414 and histidine 469 contribute to the active site. 465–469 (SGAGH) contacts substrate.

Belongs to the peptidase S10 family. In terms of assembly, heterotetramer of two A and two B chains. The A and B chains are linked by a disulfide bond. Post-translationally, the N-terminus of chain A is blocked. In terms of tissue distribution, primary leaves of seedlings.

It carries out the reaction (S)-4-hydroxymandelonitrile = 4-hydroxybenzaldehyde + hydrogen cyanide. Its function is as follows. Involved in cyanogenesis, the release of HCN from injured tissues. Is involved in the catabolism of the cyanogenic glycoside dhurrin. The protein is P-(S)-hydroxymandelonitrile lyase of Sorghum bicolor (Sorghum).